The following is a 289-amino-acid chain: Putative 2-aminoethylphosphonate transport system permease protein PhnU (289 aa).

Helical transmembrane passes span 19 to 39 (WLLL…SLIV), 76 to 96 (FFAT…LVFI), 111 to 131 (FIAL…GSAG), 150 to 170 (FLYS…PLVM), 202 to 222 (VIFP…LLLT), and 254 to 274 (YTVA…LFSL). One can recognise an ABC transmembrane type-1 domain in the interval 68 to 275 (LLNTLQIAFF…VLSLGLFSLY (208 aa)).

This sequence belongs to the binding-protein-dependent transport system permease family.

The protein localises to the cell inner membrane. In terms of biological role, probably part of the PhnSTUV complex (TC 3.A.1.11.5) involved in 2-aminoethylphosphonate import. Probably responsible for the translocation of the substrate across the membrane. The polypeptide is Putative 2-aminoethylphosphonate transport system permease protein PhnU (phnU) (Salmonella paratyphi A (strain ATCC 9150 / SARB42)).